Consider the following 288-residue polypeptide: Diaminopimelate epimerase (288 aa).

2 residues coordinate substrate: Asn14 and Asn67. Residue Cys76 is the Proton donor of the active site. Substrate-binding positions include 77-78, Asn166, Asn199, and 217-218; these read GN and ER. Cys226 serves as the catalytic Proton acceptor. Residue 227–228 participates in substrate binding; that stretch reads GT.

Belongs to the diaminopimelate epimerase family. In terms of assembly, homodimer.

The protein resides in the cytoplasm. The catalysed reaction is (2S,6S)-2,6-diaminopimelate = meso-2,6-diaminopimelate. The protein operates within amino-acid biosynthesis; L-lysine biosynthesis via DAP pathway; DL-2,6-diaminopimelate from LL-2,6-diaminopimelate: step 1/1. Its function is as follows. Catalyzes the stereoinversion of LL-2,6-diaminopimelate (L,L-DAP) to meso-diaminopimelate (meso-DAP), a precursor of L-lysine and an essential component of the bacterial peptidoglycan. The chain is Diaminopimelate epimerase from Bacillus cereus (strain AH820).